Reading from the N-terminus, the 513-residue chain is GMP synthase [glutamine-hydrolyzing] (513 aa).

Residues methionine 8–glutamate 198 enclose the Glutamine amidotransferase type-1 domain. Cysteine 85 acts as the Nucleophile in catalysis. Active-site residues include histidine 172 and glutamate 174. Positions tryptophan 199–arginine 388 constitute a GMPS ATP-PPase domain. Residue glycine 227–valine 233 participates in ATP binding.

Homodimer.

It catalyses the reaction XMP + L-glutamine + ATP + H2O = GMP + L-glutamate + AMP + diphosphate + 2 H(+). The protein operates within purine metabolism; GMP biosynthesis; GMP from XMP (L-Gln route): step 1/1. Catalyzes the synthesis of GMP from XMP. This Bacillus subtilis (strain 168) protein is GMP synthase [glutamine-hydrolyzing] (guaA).